An 819-amino-acid chain; its full sequence is DNA topoisomerase 4 subunit A (819 aa).

A Topo IIA-type catalytic domain is found at 30-496 (LPDIRDGLKP…QIIEIDTASL (467 aa)). Residue Tyr-118 is the O-(5'-phospho-DNA)-tyrosine intermediate of the active site.

Belongs to the type II topoisomerase GyrA/ParC subunit family. ParC type 2 subfamily. Heterotetramer composed of ParC and ParE.

It localises to the cell membrane. The enzyme catalyses ATP-dependent breakage, passage and rejoining of double-stranded DNA.. Topoisomerase IV is essential for chromosome segregation. It relaxes supercoiled DNA. Performs the decatenation events required during the replication of a circular DNA molecule. This is DNA topoisomerase 4 subunit A from Streptococcus pyogenes serotype M18 (strain MGAS8232).